Reading from the N-terminus, the 156-residue chain is Anaerobic ribonucleoside-triphosphate reductase-activating protein (156 aa).

Positions 26, 30, and 33 each coordinate [4Fe-4S] cluster. S-adenosyl-L-methionine-binding positions include 32-34 (GCY) and G72.

The protein belongs to the organic radical-activating enzymes family. Forms a tetramer composed of two NrdD and two NrdG subunits. [4Fe-4S] cluster is required as a cofactor.

The catalysed reaction is glycyl-[protein] + reduced [flavodoxin] + S-adenosyl-L-methionine = glycin-2-yl radical-[protein] + semiquinone [flavodoxin] + 5'-deoxyadenosine + L-methionine + H(+). Functionally, activation of anaerobic ribonucleoside-triphosphate reductase under anaerobic conditions by generation of an organic free radical, using S-adenosylmethionine and reduced flavodoxin as cosubstrates to produce 5'-deoxy-adenosine. This is Anaerobic ribonucleoside-triphosphate reductase-activating protein (NRDG) from Escherichia coli (Bacteriophage T4).